A 409-amino-acid polypeptide reads, in one-letter code: NADH-quinone oxidoreductase subunit D (409 aa).

This sequence belongs to the complex I 49 kDa subunit family. As to quaternary structure, NDH-1 is composed of 14 different subunits. Subunits NuoB, C, D, E, F, and G constitute the peripheral sector of the complex.

It localises to the cell inner membrane. It catalyses the reaction a quinone + NADH + 5 H(+)(in) = a quinol + NAD(+) + 4 H(+)(out). In terms of biological role, NDH-1 shuttles electrons from NADH, via FMN and iron-sulfur (Fe-S) centers, to quinones in the respiratory chain. The immediate electron acceptor for the enzyme in this species is believed to be ubiquinone. Couples the redox reaction to proton translocation (for every two electrons transferred, four hydrogen ions are translocated across the cytoplasmic membrane), and thus conserves the redox energy in a proton gradient. In Helicobacter hepaticus (strain ATCC 51449 / 3B1), this protein is NADH-quinone oxidoreductase subunit D.